The chain runs to 784 residues: DNA ligase (784 aa).

NAD(+) is bound by residues 35-39 (DAEYD), 84-85 (SL), and Glu-117. The active-site N6-AMP-lysine intermediate is the Lys-119. NAD(+)-binding residues include Arg-140, Glu-177, Lys-294, and Lys-318. Zn(2+) is bound by residues Cys-412, Cys-415, Cys-442, and Cys-448. The 82-residue stretch at 703-784 (AEGLPLAGQT…FLALLRQLES (82 aa)) folds into the BRCT domain.

It belongs to the NAD-dependent DNA ligase family. LigA subfamily. The cofactor is Mg(2+). It depends on Mn(2+) as a cofactor.

The enzyme catalyses NAD(+) + (deoxyribonucleotide)n-3'-hydroxyl + 5'-phospho-(deoxyribonucleotide)m = (deoxyribonucleotide)n+m + AMP + beta-nicotinamide D-nucleotide.. Functionally, DNA ligase that catalyzes the formation of phosphodiester linkages between 5'-phosphoryl and 3'-hydroxyl groups in double-stranded DNA using NAD as a coenzyme and as the energy source for the reaction. It is essential for DNA replication and repair of damaged DNA. This Azotobacter vinelandii (strain DJ / ATCC BAA-1303) protein is DNA ligase.